We begin with the raw amino-acid sequence, 993 residues long: Vinculin (993 aa).

2 consecutive repeat copies span residues 258-364 (DSDN…TKEI) and 373-480 (TNTQ…ELVD). Positions 258-480 (DSDNVTVMRK…LRNKLRELVD (223 aa)) are 2 X repeats. Positions 730 to 797 (ITGAGGSRPP…PPPETDDEEE (68 aa)) are disordered. A compositionally biased stretch (basic and acidic residues) spans 758 to 768 (VHDRIYIREDI). The span at 769-790 (PTPPRPPPPVEISPPPRPPPPP) shows a compositional bias: pro residues.

Belongs to the vinculin/alpha-catenin family. Exhibits self-association properties.

It is found in the cytoplasm. Its subcellular location is the cytoskeleton. The protein localises to the cell junction. The protein resides in the adherens junction. It localises to the cell membrane. Functionally, involved in cell adhesion. May be involved in the attachment of the actin-based microfilaments to the plasma membrane. In Brugia malayi (Filarial nematode worm), this protein is Vinculin.